The primary structure comprises 732 residues: Coagulation factor XIII A chain (732 aa).

Residues 1 to 27 (MSETSRTAFGGRRAVPPNNSNAAEDDL) are disordered. Ser2 carries the N-acetylserine modification. A propeptide spans 2–38 (SETSRTAFGGRRAVPPNNSNAAEDDLPTVELQGVVPR) (activation peptide). Residues Cys315, His374, and Asp397 contribute to the active site. Ca(2+) contacts are provided by Asn437, Asp439, Glu486, and Glu491. Asn614 carries N-linked (GlcNAc...) asparagine glycosylation.

Belongs to the transglutaminase superfamily. Transglutaminase family. Tetramer of two A chains (F13A1) and two B (F13B) chains. Requires Ca(2+) as cofactor. The activation peptide is released by thrombin.

It is found in the cytoplasm. The protein resides in the secreted. It catalyses the reaction L-glutaminyl-[protein] + L-lysyl-[protein] = [protein]-L-lysyl-N(6)-5-L-glutamyl-[protein] + NH4(+). In terms of biological role, factor XIII is activated by thrombin and calcium ion to a transglutaminase that catalyzes the formation of gamma-glutamyl-epsilon-lysine cross-links between fibrin chains, thus stabilizing the fibrin clot. Also cross-link alpha-2-plasmin inhibitor, or fibronectin, to the alpha chains of fibrin. This chain is Coagulation factor XIII A chain (F13A1), found in Homo sapiens (Human).